Here is a 574-residue protein sequence, read N- to C-terminus: K(+)/H(+) antiporter NhaP2 (574 aa).

Transmembrane regions (helical) follow at residues 6–26 (INSFFLIGALLAAVSVLLSPV), 34–54 (ILLIFLAVGILAGEDGPGGIL), 58–78 (YSTAYLVSNLALAIILLDGGM), 87–107 (VALWPALSLATFGVAITTSIT), 109–129 (VMAAWLFDLHWLQGLLVGAIV), 173–193 (IAILGNVDAELSASFMLISFI), 196–216 (FGLGIFLGLGGGWLLWKLVNL), 219–239 (LAEGLYSILVLSGGLMIYAAS), 242–262 (LGGSGILSIYLVGLFLGNKPT), 271–291 (VLDGMTWVSQIGMFLVLGLLL), 299–319 (IWLPGLALAFGMILFARPLAV), 335–355 (WFISWVGLRGAVPIILAVFPM), and 359–379 (LPGAQLYFNLAFFVVLVSLLV). Positions 405 to 486 (SGVEIYPSSE…LEALSNLFSQ (82 aa)) constitute an RCK C-terminal domain.

It belongs to the monovalent cation:proton antiporter 1 (CPA1) transporter (TC 2.A.36) family. NhaP2 subfamily.

The protein resides in the cell inner membrane. It catalyses the reaction K(+)(in) + H(+)(out) = K(+)(out) + H(+)(in). In terms of biological role, k(+)/H(+) antiporter that extrudes potassium in exchange for external protons and maintains the internal concentration of potassium under toxic levels. The polypeptide is K(+)/H(+) antiporter NhaP2 (Shewanella sp. (strain MR-7)).